Reading from the N-terminus, the 409-residue chain is Elongation factor Tu (409 aa).

One can recognise a tr-type G domain in the interval 10–214 (KPHVNVGTIG…AVDSYIPTPE (205 aa)). Residues 19–26 (GHVDHGKT) are G1. 19-26 (GHVDHGKT) lines the GTP pocket. Mg(2+) is bound at residue threonine 26. The interval 60–64 (GITIN) is G2. The interval 81–84 (DCPG) is G3. GTP is bound by residues 81–85 (DCPGH) and 136–139 (NKVD). Residues 136-139 (NKVD) form a G4 region. The segment at 174-176 (SAL) is G5.

This sequence belongs to the TRAFAC class translation factor GTPase superfamily. Classic translation factor GTPase family. EF-Tu/EF-1A subfamily. In terms of assembly, monomer.

The protein localises to the cytoplasm. The enzyme catalyses GTP + H2O = GDP + phosphate + H(+). Functionally, GTP hydrolase that promotes the GTP-dependent binding of aminoacyl-tRNA to the A-site of ribosomes during protein biosynthesis. The chain is Elongation factor Tu from Synechococcus sp. (strain JA-3-3Ab) (Cyanobacteria bacterium Yellowstone A-Prime).